A 327-amino-acid polypeptide reads, in one-letter code: Acetyl-coenzyme A carboxylase carboxyl transferase subunit alpha (327 aa).

Positions 46 to 299 constitute a CoA carboxyltransferase C-terminal domain; that stretch reads LEARAIQLRR…RQVLLRHLKD (254 aa).

Belongs to the AccA family. As to quaternary structure, acetyl-CoA carboxylase is a heterohexamer composed of biotin carboxyl carrier protein (AccB), biotin carboxylase (AccC) and two subunits each of ACCase subunit alpha (AccA) and ACCase subunit beta (AccD).

It localises to the cytoplasm. The enzyme catalyses N(6)-carboxybiotinyl-L-lysyl-[protein] + acetyl-CoA = N(6)-biotinyl-L-lysyl-[protein] + malonyl-CoA. Its pathway is lipid metabolism; malonyl-CoA biosynthesis; malonyl-CoA from acetyl-CoA: step 1/1. Its function is as follows. Component of the acetyl coenzyme A carboxylase (ACC) complex. First, biotin carboxylase catalyzes the carboxylation of biotin on its carrier protein (BCCP) and then the CO(2) group is transferred by the carboxyltransferase to acetyl-CoA to form malonyl-CoA. The polypeptide is Acetyl-coenzyme A carboxylase carboxyl transferase subunit alpha (Synechococcus elongatus (strain ATCC 33912 / PCC 7942 / FACHB-805) (Anacystis nidulans R2)).